Here is a 372-residue protein sequence, read N- to C-terminus: Queuine tRNA-ribosyltransferase (372 aa).

The Proton acceptor role is filled by Asp-92. Substrate contacts are provided by residues Asp-92–Tyr-96, Asp-146, Gln-188, and Gly-215. The tract at residues Gly-246 to Glu-252 is RNA binding. Asp-265 (nucleophile) is an active-site residue. Residues Thr-270–Arg-274 form an RNA binding; important for wobble base 34 recognition region. Positions 303, 305, 308, and 334 each coordinate Zn(2+).

The protein belongs to the queuine tRNA-ribosyltransferase family. Homodimer. Within each dimer, one monomer is responsible for RNA recognition and catalysis, while the other monomer binds to the replacement base PreQ1. Requires Zn(2+) as cofactor.

It carries out the reaction 7-aminomethyl-7-carbaguanine + guanosine(34) in tRNA = 7-aminomethyl-7-carbaguanosine(34) in tRNA + guanine. It participates in tRNA modification; tRNA-queuosine biosynthesis. In terms of biological role, catalyzes the base-exchange of a guanine (G) residue with the queuine precursor 7-aminomethyl-7-deazaguanine (PreQ1) at position 34 (anticodon wobble position) in tRNAs with GU(N) anticodons (tRNA-Asp, -Asn, -His and -Tyr). Catalysis occurs through a double-displacement mechanism. The nucleophile active site attacks the C1' of nucleotide 34 to detach the guanine base from the RNA, forming a covalent enzyme-RNA intermediate. The proton acceptor active site deprotonates the incoming PreQ1, allowing a nucleophilic attack on the C1' of the ribose to form the product. After dissociation, two additional enzymatic reactions on the tRNA convert PreQ1 to queuine (Q), resulting in the hypermodified nucleoside queuosine (7-(((4,5-cis-dihydroxy-2-cyclopenten-1-yl)amino)methyl)-7-deazaguanosine). The chain is Queuine tRNA-ribosyltransferase from Prochlorococcus marinus (strain MIT 9515).